The primary structure comprises 203 residues: 5-formyltetrahydrofolate cyclo-ligase (203 aa).

Position 2 is an N-acetylalanine (A2). ATP is bound by residues 10-14 (KRGLR) and R14. Substrate-binding positions include L56, E61, and 148–152 (RGKGY). 145-153 (RLGRGKGYY) is a binding site for ATP. Mg(2+) contacts are provided by D154 and D189.

It belongs to the 5-formyltetrahydrofolate cyclo-ligase family. Monomer. Mg(2+) is required as a cofactor.

Its subcellular location is the cytoplasm. The enzyme catalyses (6S)-5-formyl-5,6,7,8-tetrahydrofolate + ATP = (6R)-5,10-methenyltetrahydrofolate + ADP + phosphate. In terms of biological role, contributes to tetrahydrofolate metabolism. Helps regulate carbon flow through the folate-dependent one-carbon metabolic network that supplies carbon for the biosynthesis of purines, thymidine and amino acids. Catalyzes the irreversible conversion of 5-formyltetrahydrofolate (5-CHO-H(4)PteGlu) to yield 5,10-methenyltetrahydrofolate. The protein is 5-formyltetrahydrofolate cyclo-ligase (Mthfs) of Mus musculus (Mouse).